A 921-amino-acid chain; its full sequence is MADNNTPGDKKLSVPTKTLTLKPRVETGTVRQSFPHGRSKQVVVEKRGTKRRVGDGAPDAPHAPEPVVAKAPPPPPPSNRPSGPRPGSSQRGGSGVVLRTLTEDERSARASALADARVRDMEERRQAEEEARRRAEREAAERAEREAAEARRKAEEERHRQEEEAKRKAELEAKKRFGEGEAPRPATAAPQQQPAAVTAPARPAQAPGRPQGAPGSRPQQIGTSARPGGAQPAGARPAAARPAGAGPLGRAPGVAAGPEDDEGPRQIRRGPGGAARPAPPPKTTHKPGPQKQRGRLTVVTALTADDVRERSIASFRRRTQRLKGHAANEQKEKLVREVTIPEAITIQELANRMSERAVDVIRLLMRQGAMHKITDVIDADTAQLIAEELGHSVKRVAASDVEEGLFDVVDDSTDTEPRSPVVTVMGHVDHGKTSLLDALRHANVVSGEAGGITQHIGAYQVTAPDSGKKITFIDTPGHAAFTAMRARGAKVTDIVVLVVAADDGVMPQTIEAINHAKAAKVPMIVAINKIDKPDARPDRVRTELLQHEVQVESLGGEVVDVEVSAKNKTNLDRLLEMIALQADILDLKTNSDRPAEGTVIEAKLDRGRGPVATVLVQRGTLRVGDIIVAGAEMGRVRALISDQGETLQEAGPSVPVEVLGFNGPPEAGDRLAVVENEARARQVTSYRAHQKRENAAASISGMRGSLEQMMSQLKTAGRKEFPLVIKADVQGSLEAILGSLEKLGTDEVAARILHAGVGGISESDVTLAEGFNAAIIGFSVRANKEAAALAKRNGIEIRYYNIIYDLVDDVKKAMSGLLAPTLRETMLGNAQILEVFNISKVGKVAGCRVTDGTVERGANVRLIRDNVVVHEGKLSTLKRFKDEVKEVQAGQECGMAFESYGDMRVGDVIECYRVETIQRSL.

The tract at residues 1-296 is disordered; it reads MADNNTPGDK…PGPQKQRGRL (296 aa). Residues 80–89 show a composition bias toward low complexity; it reads RPSGPRPGSS. Residues 116–182 show a composition bias toward basic and acidic residues; the sequence is ARVRDMEERR…AKKRFGEGEA (67 aa). Over residues 183-257 the composition is skewed to low complexity; it reads PRPATAAPQQ…LGRAPGVAAG (75 aa). A tr-type G domain is found at 417 to 586; it reads PRSPVVTVMG…MIALQADILD (170 aa). The interval 426–433 is G1; it reads GHVDHGKT. 426 to 433 serves as a coordination point for GTP; sequence GHVDHGKT. The interval 451–455 is G2; it reads GITQH. The tract at residues 474–477 is G3; it reads DTPG. Residues 474-478 and 528-531 each bind GTP; these read DTPGH and NKID. The segment at 528–531 is G4; sequence NKID. The tract at residues 564–566 is G5; it reads SAK.

It belongs to the TRAFAC class translation factor GTPase superfamily. Classic translation factor GTPase family. IF-2 subfamily.

It is found in the cytoplasm. One of the essential components for the initiation of protein synthesis. Protects formylmethionyl-tRNA from spontaneous hydrolysis and promotes its binding to the 30S ribosomal subunits. Also involved in the hydrolysis of GTP during the formation of the 70S ribosomal complex. This Bradyrhizobium sp. (strain BTAi1 / ATCC BAA-1182) protein is Translation initiation factor IF-2.